The sequence spans 356 residues: Protein RecA (356 aa).

75 to 82 (GPESSGKT) is a binding site for ATP.

This sequence belongs to the RecA family.

The protein resides in the cytoplasm. Its function is as follows. Can catalyze the hydrolysis of ATP in the presence of single-stranded DNA, the ATP-dependent uptake of single-stranded DNA by duplex DNA, and the ATP-dependent hybridization of homologous single-stranded DNAs. It interacts with LexA causing its activation and leading to its autocatalytic cleavage. In Burkholderia mallei (strain ATCC 23344), this protein is Protein RecA.